The sequence spans 302 residues: Oxygen-dependent coproporphyrinogen-III oxidase (302 aa).

Ser-90 lines the substrate pocket. The a divalent metal cation site is built by His-94 and His-104. His-104 acts as the Proton donor in catalysis. 106 to 108 lines the substrate pocket; the sequence is NVR. Residues His-143 and His-173 each contribute to the a divalent metal cation site. The segment at 238–273 is important for dimerization; sequence YVEFNLIYDRGTIFGLQSNGRTESILLSMPPIVKWR.

This sequence belongs to the aerobic coproporphyrinogen-III oxidase family. Homodimer. A divalent metal cation is required as a cofactor.

Its subcellular location is the cytoplasm. It carries out the reaction coproporphyrinogen III + O2 + 2 H(+) = protoporphyrinogen IX + 2 CO2 + 2 H2O. The protein operates within porphyrin-containing compound metabolism; protoporphyrin-IX biosynthesis; protoporphyrinogen-IX from coproporphyrinogen-III (O2 route): step 1/1. Its function is as follows. Involved in the heme biosynthesis. Catalyzes the aerobic oxidative decarboxylation of propionate groups of rings A and B of coproporphyrinogen-III to yield the vinyl groups in protoporphyrinogen-IX. The polypeptide is Oxygen-dependent coproporphyrinogen-III oxidase (Methylobacillus flagellatus (strain ATCC 51484 / DSM 6875 / VKM B-1610 / KT)).